The primary structure comprises 179 residues: Large ribosomal subunit protein uL6 (179 aa).

The protein belongs to the universal ribosomal protein uL6 family. As to quaternary structure, part of the 50S ribosomal subunit.

This protein binds to the 23S rRNA, and is important in its secondary structure. It is located near the subunit interface in the base of the L7/L12 stalk, and near the tRNA binding site of the peptidyltransferase center. The polypeptide is Large ribosomal subunit protein uL6 (Acidobacterium capsulatum (strain ATCC 51196 / DSM 11244 / BCRC 80197 / JCM 7670 / NBRC 15755 / NCIMB 13165 / 161)).